A 109-amino-acid polypeptide reads, in one-letter code: MFGKGGMGNLMKQAQMMQEKMAKMQEEIARMEMVGESGAGLVKVTMTGAHTVRKVEIDPSLMEDDKEMLEDLIAAACNDAARRIEENQKAKMAEVTGGMQLPPGMKMPF.

Belongs to the YbaB/EbfC family. In terms of assembly, homodimer.

It localises to the cytoplasm. It is found in the nucleoid. Its function is as follows. Binds to DNA and alters its conformation. May be involved in regulation of gene expression, nucleoid organization and DNA protection. This chain is Nucleoid-associated protein Sputw3181_1707, found in Shewanella sp. (strain W3-18-1).